Consider the following 779-residue polypeptide: 3-isopropylmalate dehydratase (779 aa).

[4Fe-4S] cluster-binding residues include Cys360, Cys421, and Cys424. The interval 484–518 (QDQSSPKVEVTSEDEKELESAAYDHAEPVQPEDAP) is disordered. Position 488 is a phosphoserine (Ser488). Thr494 is modified (phosphothreonine). Position 495 is a phosphoserine (Ser495). A compositionally biased stretch (basic and acidic residues) spans 501–510 (LESAAYDHAE).

This sequence belongs to the aconitase/IPM isomerase family. Monomer. [4Fe-4S] cluster serves as cofactor.

The enzyme catalyses (2R,3S)-3-isopropylmalate = (2S)-2-isopropylmalate. Its pathway is amino-acid biosynthesis; L-leucine biosynthesis; L-leucine from 3-methyl-2-oxobutanoate: step 2/4. Its function is as follows. Catalyzes the isomerization between 2-isopropylmalate and 3-isopropylmalate, via the formation of 2-isopropylmaleate. In Saccharomyces cerevisiae (strain ATCC 204508 / S288c) (Baker's yeast), this protein is 3-isopropylmalate dehydratase (LEU1).